Reading from the N-terminus, the 506-residue chain is DNA nucleotidylexotransferase (506 aa).

The Nuclear localization signal motif lies at Ser11–Lys17. Residues Gly27–His124 enclose the BRCT domain. Residues Val258 to Thr262 form an involved in DNA binding region. Residues Gly333 to Lys338 and His342 to Asp345 contribute to the a 2'-deoxyribonucleoside 5'-triphosphate site. Mg(2+)-binding residues include Asp343, Asp345, and Asp430. Gly445 to Trp446 provides a ligand contact to a 2'-deoxyribonucleoside 5'-triphosphate.

Belongs to the DNA polymerase type-X family. Requires Mg(2+) as cofactor.

The protein localises to the nucleus. The enzyme catalyses DNA(n) + a 2'-deoxyribonucleoside 5'-triphosphate = DNA(n+1) + diphosphate. In terms of biological role, template-independent DNA polymerase which catalyzes the random addition of deoxynucleoside 5'-triphosphate to the 3'-end of a DNA initiator. One of the in vivo functions of this enzyme is the addition of nucleotides at the junction (N region) of rearranged Ig heavy chain and T-cell receptor gene segments during the maturation of B- and T-cells. This is DNA nucleotidylexotransferase (DNTT) from Gallus gallus (Chicken).